The chain runs to 142 residues: Large ribosomal subunit protein uL23 (142 aa).

This sequence belongs to the universal ribosomal protein uL23 family. In terms of assembly, component of the large ribosomal subunit. Mature ribosomes consist of a small (40S) and a large (60S) subunit. The 40S subunit contains about 32 different proteins and 1 molecule of RNA (18S). The 60S subunit contains 45 different proteins and 3 molecules of RNA (25S, 5.8S and 5S).

The protein resides in the cytoplasm. Functionally, component of the ribosome, a large ribonucleoprotein complex responsible for the synthesis of proteins in the cell. The small ribosomal subunit (SSU) binds messenger RNAs (mRNAs) and translates the encoded message by selecting cognate aminoacyl-transfer RNA (tRNA) molecules. The large subunit (LSU) contains the ribosomal catalytic site termed the peptidyl transferase center (PTC), which catalyzes the formation of peptide bonds, thereby polymerizing the amino acids delivered by tRNAs into a polypeptide chain. The nascent polypeptides leave the ribosome through a tunnel in the LSU and interact with protein factors that function in enzymatic processing, targeting, and the membrane insertion of nascent chains at the exit of the ribosomal tunnel. RPL25 is a major component of the universal docking site for these factors at the polypeptide exit tunnel. The protein is Large ribosomal subunit protein uL23 of Candida albicans (strain SC5314 / ATCC MYA-2876) (Yeast).